The primary structure comprises 366 residues: Ribosomal RNA large subunit methyltransferase M (366 aa).

Residues Ser188, 221 to 224 (CPGG), Asp240, Asp260, and Asp277 contribute to the S-adenosyl-L-methionine site. The active-site Proton acceptor is the Lys306.

This sequence belongs to the class I-like SAM-binding methyltransferase superfamily. RNA methyltransferase RlmE family. RlmM subfamily. As to quaternary structure, monomer.

It is found in the cytoplasm. It catalyses the reaction cytidine(2498) in 23S rRNA + S-adenosyl-L-methionine = 2'-O-methylcytidine(2498) in 23S rRNA + S-adenosyl-L-homocysteine + H(+). In terms of biological role, catalyzes the 2'-O-methylation at nucleotide C2498 in 23S rRNA. This chain is Ribosomal RNA large subunit methyltransferase M, found in Sodalis glossinidius (strain morsitans).